The chain runs to 483 residues: MLTLDTLNTMLAVSEEGMVEEMILALLASPQLVIFFEKFPRLKNAVTADLTRWREALRSRLKDARVPPELTEEVMCYQQSQLLSTPQFIVQLPQILALLHRLHSPYAAQAKQLTESNSTFTPALHTLFLQRWRLSLVVQATTLNQQLLEEEREQLLSDVQERMTLSGQLEPTLAENDNAAGRLWDMSAGQLKRGDYQLIVKYGEFLAAQPELMQLAEQLGRSREAKSVPKKDAPMETFRTLVREPATVPEQVDGIQQGDDILRLLPPELATLGITELEYEFYRRLVEKQLLTYRLHGEAWREKVTERPVVHQDVDEQPRGPFIVCVDTSGSMGGFNEQCAKAFCLALMRVALADNRRCFIMLFSTDVVRYELSGPEGIEQAIRFLSQRFRGGTDIASCFRAIIERMQGREWFDADAVVISDFIAQRLPDDVVSKVGELQRLHQHRFHAVAMSAHGKPGIMRIFNHIWRFDTGMRSRLLRRWRR.

Belongs to the ViaA family. Homodimer. Interacts with RavA.

The protein localises to the cytoplasm. Functionally, component of the RavA-ViaA chaperone complex, which may act on the membrane to optimize the function of some of the respiratory chains. ViaA stimulates the ATPase activity of RavA. The chain is Regulatory protein ViaA from Salmonella paratyphi A (strain ATCC 9150 / SARB42).